Reading from the N-terminus, the 47-residue chain is Bifunctional chitinase/lysozyme (47 aa).

The region spanning 1–47 is the GH18 domain; that stretch reads GGIAIYWGQNGNEGTLTQTCNTGKYSYVNIAFLNKFGNGQTPEINLA.

The protein belongs to the glycosyl hydrolase 18 family. Chitinase class II subfamily.

It localises to the secreted. It is found in the extracellular space. The catalysed reaction is Random endo-hydrolysis of N-acetyl-beta-D-glucosaminide (1-&gt;4)-beta-linkages in chitin and chitodextrins.. It catalyses the reaction Hydrolysis of (1-&gt;4)-beta-linkages between N-acetylmuramic acid and N-acetyl-D-glucosamine residues in a peptidoglycan and between N-acetyl-D-glucosamine residues in chitodextrins.. Its function is as follows. Bifunctional enzyme with lysozyme/chitinase activity. The polypeptide is Bifunctional chitinase/lysozyme (Parthenocissus quinquefolia (Virginia creeper)).